The primary structure comprises 218 residues: NAD(P)H-quinone oxidoreductase subunit I (218 aa).

2 4Fe-4S ferredoxin-type domains span residues G55–V84 and R95–E124. Positions 64, 67, 70, 74, 104, 107, 110, and 114 each coordinate [4Fe-4S] cluster. A disordered region spans residues L192–G218.

The protein belongs to the complex I 23 kDa subunit family. As to quaternary structure, NDH-1 is composed of at least 11 different subunits. The cofactor is [4Fe-4S] cluster.

It localises to the cellular thylakoid membrane. It carries out the reaction a plastoquinone + NADH + (n+1) H(+)(in) = a plastoquinol + NAD(+) + n H(+)(out). The catalysed reaction is a plastoquinone + NADPH + (n+1) H(+)(in) = a plastoquinol + NADP(+) + n H(+)(out). NDH-1 shuttles electrons from an unknown electron donor, via FMN and iron-sulfur (Fe-S) centers, to quinones in the respiratory and/or the photosynthetic chain. The immediate electron acceptor for the enzyme in this species is believed to be plastoquinone. Couples the redox reaction to proton translocation, and thus conserves the redox energy in a proton gradient. The polypeptide is NAD(P)H-quinone oxidoreductase subunit I (Prochlorococcus marinus (strain MIT 9303)).